A 431-amino-acid polypeptide reads, in one-letter code: Glutamate-1-semialdehyde 2,1-aminomutase (431 aa).

The residue at position 265 (K265) is an N6-(pyridoxal phosphate)lysine.

Belongs to the class-III pyridoxal-phosphate-dependent aminotransferase family. HemL subfamily. In terms of assembly, homodimer. Pyridoxal 5'-phosphate serves as cofactor.

It is found in the cytoplasm. It catalyses the reaction (S)-4-amino-5-oxopentanoate = 5-aminolevulinate. It functions in the pathway porphyrin-containing compound metabolism; protoporphyrin-IX biosynthesis; 5-aminolevulinate from L-glutamyl-tRNA(Glu): step 2/2. In Pseudoalteromonas atlantica (strain T6c / ATCC BAA-1087), this protein is Glutamate-1-semialdehyde 2,1-aminomutase.